We begin with the raw amino-acid sequence, 332 residues long: Putative ankyrin repeat protein R896 (332 aa).

5 ANK repeats span residues G159 to S188, D190 to A218, D219 to A248, A249 to T278, and N280 to S308.

In Acanthamoeba polyphaga mimivirus (APMV), this protein is Putative ankyrin repeat protein R896.